Here is a 183-residue protein sequence, read N- to C-terminus: Hypoxanthine-guanine-xanthine phosphoribosyltransferase (183 aa).

Residues 102–110 (EDIIDTGLT), Lys-134, and Asp-163 contribute to the GMP site. The active-site Proton acceptor is Asp-106. Asp-163 is a Mg(2+) binding site.

As to quaternary structure, homodimer. The cofactor is Mg(2+).

It is found in the cytoplasm. The enzyme catalyses IMP + diphosphate = hypoxanthine + 5-phospho-alpha-D-ribose 1-diphosphate. The catalysed reaction is GMP + diphosphate = guanine + 5-phospho-alpha-D-ribose 1-diphosphate. It carries out the reaction XMP + diphosphate = xanthine + 5-phospho-alpha-D-ribose 1-diphosphate. The protein operates within purine metabolism; GMP biosynthesis via salvage pathway; GMP from guanine: step 1/1. It participates in purine metabolism; IMP biosynthesis via salvage pathway; IMP from hypoxanthine: step 1/1. Its pathway is purine metabolism; XMP biosynthesis via salvage pathway; XMP from xanthine: step 1/1. In terms of biological role, essential in nucleic acid metabolism of T.foetus because the parasite is unable to synthesize purine nucleotides de novo and relies on the HGXPRTase activities for its purine requirements by salvaging purine bases from the host. Works with guanine, hypoxanthine and xanthine. The sequence is that of Hypoxanthine-guanine-xanthine phosphoribosyltransferase (HPT) from Tritrichomonas foetus (Trichomonas foetus).